The primary structure comprises 141 residues: Nucleoside diphosphate kinase (141 aa).

Residues Lys-11, Phe-59, Arg-87, Thr-93, Arg-104, and Asn-114 each coordinate ATP. His-117 acts as the Pros-phosphohistidine intermediate in catalysis.

The protein belongs to the NDK family. As to quaternary structure, homotetramer. Mg(2+) is required as a cofactor.

The protein localises to the cytoplasm. The catalysed reaction is a 2'-deoxyribonucleoside 5'-diphosphate + ATP = a 2'-deoxyribonucleoside 5'-triphosphate + ADP. It catalyses the reaction a ribonucleoside 5'-diphosphate + ATP = a ribonucleoside 5'-triphosphate + ADP. In terms of biological role, major role in the synthesis of nucleoside triphosphates other than ATP. The ATP gamma phosphate is transferred to the NDP beta phosphate via a ping-pong mechanism, using a phosphorylated active-site intermediate. This is Nucleoside diphosphate kinase from Vibrio campbellii (strain ATCC BAA-1116).